A 433-amino-acid polypeptide reads, in one-letter code: Serine hydroxymethyltransferase (433 aa).

Residues Leu133 and 137–139 (GHL) contribute to the (6S)-5,6,7,8-tetrahydrofolate site. Residue Lys242 is modified to N6-(pyridoxal phosphate)lysine. 366–368 (SPF) is a (6S)-5,6,7,8-tetrahydrofolate binding site.

This sequence belongs to the SHMT family. As to quaternary structure, homodimer. It depends on pyridoxal 5'-phosphate as a cofactor.

The protein localises to the cytoplasm. The enzyme catalyses (6R)-5,10-methylene-5,6,7,8-tetrahydrofolate + glycine + H2O = (6S)-5,6,7,8-tetrahydrofolate + L-serine. It participates in one-carbon metabolism; tetrahydrofolate interconversion. The protein operates within amino-acid biosynthesis; glycine biosynthesis; glycine from L-serine: step 1/1. Catalyzes the reversible interconversion of serine and glycine with tetrahydrofolate (THF) serving as the one-carbon carrier. This reaction serves as the major source of one-carbon groups required for the biosynthesis of purines, thymidylate, methionine, and other important biomolecules. Also exhibits THF-independent aldolase activity toward beta-hydroxyamino acids, producing glycine and aldehydes, via a retro-aldol mechanism. This is Serine hydroxymethyltransferase from Beijerinckia indica subsp. indica (strain ATCC 9039 / DSM 1715 / NCIMB 8712).